The following is a 260-amino-acid chain: MTYTSPRRPQLFYTTAPMPCPYVAGRMERKVVTDIGGPDAERLHNRLSRAGFRRSHTIAYAPVCPSCSACVPIRVPVASFSPDRTQRRTLRRNATIEGFEVPAHATTEQFTLFQRYQFARHAEGDMAAMNFYDYRAMIEDTPIDTMMIEFRTPEDRLVCVSLIDRLDDGLSAVYSFFDPTMDARSLGSYAIMHLIAHTRRLGLPYLYLGYWIRDSAKMAYKARFQPAEILFHGAWTPLDRDRLPEEGDRGPARFPASLTE.

Residues 241–251 are compositionally biased toward basic and acidic residues; the sequence is DRLPEEGDRGP. Residues 241–260 are disordered; it reads DRLPEEGDRGPARFPASLTE.

This sequence belongs to the R-transferase family. Bpt subfamily.

The protein localises to the cytoplasm. It carries out the reaction N-terminal L-glutamyl-[protein] + L-leucyl-tRNA(Leu) = N-terminal L-leucyl-L-glutamyl-[protein] + tRNA(Leu) + H(+). The enzyme catalyses N-terminal L-aspartyl-[protein] + L-leucyl-tRNA(Leu) = N-terminal L-leucyl-L-aspartyl-[protein] + tRNA(Leu) + H(+). Its function is as follows. Functions in the N-end rule pathway of protein degradation where it conjugates Leu from its aminoacyl-tRNA to the N-termini of proteins containing an N-terminal aspartate or glutamate. The chain is Aspartate/glutamate leucyltransferase from Gluconacetobacter diazotrophicus (strain ATCC 49037 / DSM 5601 / CCUG 37298 / CIP 103539 / LMG 7603 / PAl5).